Here is a 373-residue protein sequence, read N- to C-terminus: Late expression factor 3 (373 aa).

The protein belongs to the baculoviridae LEF-3 family. Interacts with alkaline nuclease.

It localises to the host nucleus. In terms of biological role, required for late and very late gene expression. Lef-3 could be a single-stranded DNA-binding protein. The sequence is that of Late expression factor 3 (LEF-3) from Orgyia pseudotsugata (Douglas-fir tussock moth).